We begin with the raw amino-acid sequence, 447 residues long: NADH-ubiquinone oxidoreductase chain 4 (447 aa).

13 helical membrane passes run 28 to 48 (IFLA…FCDI), 56 to 76 (MISY…LMAS), 85 to 105 (YVNL…FTFS), 110 to 130 (FMFY…ILGW), 141 to 161 (IYLL…IFYI), 183 to 203 (FLYL…LVHL), 213 to 233 (PVSG…YGLL), 246 to 266 (FNYI…LICL), 273 to 293 (ALIA…LMTM), 301 to 321 (SYTL…LANI), 343 to 365 (SLSL…LNLL), 380 to 400 (LTMI…LYLF), and 409 to 431 (YSGV…LHWL).

The protein belongs to the complex I subunit 4 family.

Its subcellular location is the mitochondrion membrane. The enzyme catalyses a ubiquinone + NADH + 5 H(+)(in) = a ubiquinol + NAD(+) + 4 H(+)(out). Functionally, core subunit of the mitochondrial membrane respiratory chain NADH dehydrogenase (Complex I) that is believed to belong to the minimal assembly required for catalysis. Complex I functions in the transfer of electrons from NADH to the respiratory chain. The immediate electron acceptor for the enzyme is believed to be ubiquinone. This is NADH-ubiquinone oxidoreductase chain 4 from Aedes aegypti (Yellowfever mosquito).